The primary structure comprises 483 residues: Triacylglycerol lipase ptl3 (483 aa).

Residues L141–T340 enclose the PNPLA domain. Positions G145–G150 match the GXGXXG motif. The short motif at G172–G176 is the GXSXG element. S174 functions as the Nucleophile in the catalytic mechanism. The active-site Proton acceptor is D327.

It is found in the cytoplasm. It localises to the lipid droplet. It catalyses the reaction a triacylglycerol + H2O = a diacylglycerol + a fatty acid + H(+). Lipid particle-localized triacylglycerol (TAG) lipase. The lipid droplet/particle is a lipid storage compartment which serves as a depot of energy and building blocks for membrane lipid biosynthesis. Involved in the mobilization of the non-polar storage lipids triacylglycerols (TAGs) from lipid particles by hydrolysis of TAGs, releasing and supplying specific fatty acids to the appropriate metabolic pathways. The chain is Triacylglycerol lipase ptl3 (ptl3) from Schizosaccharomyces pombe (strain 972 / ATCC 24843) (Fission yeast).